A 189-amino-acid chain; its full sequence is Fine tangled pili major subunit (189 aa).

Belongs to the Dps family. In terms of assembly, hexamer.

The protein localises to the fimbrium. Functionally, may contribute to bacterial adherence, or be involved in the protection of the bacteria, or both. The protein is Fine tangled pili major subunit (ftpA) of Haemophilus ducreyi (strain 35000HP / ATCC 700724).